Consider the following 556-residue polypeptide: tRNA (guanine(37)-N(1))-methyltransferase (556 aa).

The N-terminal 30 residues, 1-30 (MIITTKALTVLPHSGLRTTHRSLLARLRHY), are a transit peptide targeting the mitochondrion. S-adenosyl-L-methionine-binding positions include H249, 287–288 (DL), 315–316 (DA), and N346. Disordered regions lie at residues 444–465 (QHEE…KMKD) and 524–556 (KKAA…EMQM). 2 stretches are compositionally biased toward basic and acidic residues: residues 454-465 (EEAKRPSNKMKD) and 540-549 (SKPDTKKIEA).

This sequence belongs to the class I-like SAM-binding methyltransferase superfamily. TRM5/TYW2 family. As to quaternary structure, monomer.

The protein resides in the mitochondrion matrix. It is found in the nucleus. The protein localises to the cytoplasm. The catalysed reaction is guanosine(37) in tRNA + S-adenosyl-L-methionine = N(1)-methylguanosine(37) in tRNA + S-adenosyl-L-homocysteine + H(+). In terms of biological role, specifically methylates the N1 position of guanosine-37 in various cytoplasmic and mitochondrial tRNAs. Methylation is not dependent on the nature of the nucleoside 5' of the target nucleoside. This is the first step in the biosynthesis of wybutosine (yW), a modified base adjacent to the anticodon of tRNAs and required for accurate decoding. This chain is tRNA (guanine(37)-N(1))-methyltransferase, found in Anopheles gambiae (African malaria mosquito).